Consider the following 538-residue polypeptide: Phosphoenolpyruvate carboxykinase (ATP) (538 aa).

The substrate site is built by Arg-61, Tyr-195, and Lys-201. ATP contacts are provided by residues Lys-201, His-220, and 236–244 (GLSGTGKTT). Lys-201 and His-220 together coordinate Mn(2+). Position 257 (Asp-257) interacts with Mn(2+). Positions 285, 323, and 449 each coordinate ATP. Arg-323 contacts substrate.

It belongs to the phosphoenolpyruvate carboxykinase (ATP) family. The cofactor is Mn(2+).

It is found in the cytoplasm. It catalyses the reaction oxaloacetate + ATP = phosphoenolpyruvate + ADP + CO2. Its pathway is carbohydrate biosynthesis; gluconeogenesis. Involved in the gluconeogenesis. Catalyzes the conversion of oxaloacetate (OAA) to phosphoenolpyruvate (PEP) through direct phosphoryl transfer between the nucleoside triphosphate and OAA. This Nitrobacter hamburgensis (strain DSM 10229 / NCIMB 13809 / X14) protein is Phosphoenolpyruvate carboxykinase (ATP).